Consider the following 697-residue polypeptide: Elongation factor G (697 aa).

The 281-residue stretch at 10–290 (THFRNIGIAA…AVVDYLPSPL (281 aa)) folds into the tr-type G domain. GTP is bound by residues 19-26 (AHIDAGKT), 89-93 (DTPGH), and 143-146 (NKMD).

Belongs to the TRAFAC class translation factor GTPase superfamily. Classic translation factor GTPase family. EF-G/EF-2 subfamily.

It is found in the cytoplasm. In terms of biological role, catalyzes the GTP-dependent ribosomal translocation step during translation elongation. During this step, the ribosome changes from the pre-translocational (PRE) to the post-translocational (POST) state as the newly formed A-site-bound peptidyl-tRNA and P-site-bound deacylated tRNA move to the P and E sites, respectively. Catalyzes the coordinated movement of the two tRNA molecules, the mRNA and conformational changes in the ribosome. The sequence is that of Elongation factor G from Deinococcus deserti (strain DSM 17065 / CIP 109153 / LMG 22923 / VCD115).